The primary structure comprises 399 residues: Enoyl-[acyl-carrier-protein] reductase [NADH] (399 aa).

Residues 48-53 (GASTGY), 74-75 (FE), 111-112 (DA), and 139-140 (LA) contribute to the NAD(+) site. Tyr-225 lines the substrate pocket. Catalysis depends on Tyr-235, which acts as the Proton donor. NAD(+) is bound by residues Lys-244 and 274–276 (VVT).

This sequence belongs to the TER reductase family. As to quaternary structure, monomer.

The enzyme catalyses a 2,3-saturated acyl-[ACP] + NAD(+) = a (2E)-enoyl-[ACP] + NADH + H(+). The protein operates within lipid metabolism; fatty acid biosynthesis. Its function is as follows. Involved in the final reduction of the elongation cycle of fatty acid synthesis (FAS II). Catalyzes the reduction of a carbon-carbon double bond in an enoyl moiety that is covalently linked to an acyl carrier protein (ACP). This Erwinia tasmaniensis (strain DSM 17950 / CFBP 7177 / CIP 109463 / NCPPB 4357 / Et1/99) protein is Enoyl-[acyl-carrier-protein] reductase [NADH].